A 206-amino-acid chain; its full sequence is Small ribosomal subunit protein uS4 (206 aa).

In terms of domain architecture, S4 RNA-binding spans Arg-98–Glu-176.

It belongs to the universal ribosomal protein uS4 family. In terms of assembly, part of the 30S ribosomal subunit. Contacts protein S5. The interaction surface between S4 and S5 is involved in control of translational fidelity.

Its function is as follows. One of the primary rRNA binding proteins, it binds directly to 16S rRNA where it nucleates assembly of the body of the 30S subunit. In terms of biological role, with S5 and S12 plays an important role in translational accuracy. The protein is Small ribosomal subunit protein uS4 of Gloeobacter violaceus (strain ATCC 29082 / PCC 7421).